The following is a 76-amino-acid chain: MQLVLAAKYIGAAISTIGTLGAGIGIAIVFAALINGTSRNPSLRNTLFPFAITGFALSEATGLFCLMVSFTLLYGV.

2 helical membrane passes run 14–34 (ISTI…AALI) and 48–68 (FPFA…CLMV).

Belongs to the ATPase C chain family. As to quaternary structure, F-type ATPases have 2 components, CF(1) - the catalytic core - and CF(0) - the membrane proton channel. CF(1) has five subunits: alpha(3), beta(3), gamma(1), delta(1), epsilon(1). CF(0) has three main subunits: a, b and c.

Its subcellular location is the mitochondrion membrane. Functionally, mitochondrial membrane ATP synthase (F(1)F(0) ATP synthase or Complex V) produces ATP from ADP in the presence of a proton gradient across the membrane which is generated by electron transport complexes of the respiratory chain. F-type ATPases consist of two structural domains, F(1) - containing the extramembraneous catalytic core and F(0) - containing the membrane proton channel, linked together by a central stalk and a peripheral stalk. During catalysis, ATP synthesis in the catalytic domain of F(1) is coupled via a rotary mechanism of the central stalk subunits to proton translocation. Part of the complex F(0) domain. A homomeric c-ring of probably 10 subunits is part of the complex rotary element. The protein is ATP synthase subunit 9, mitochondrial (ATP9) of Cyberlindnera mrakii (Yeast).